The sequence spans 126 residues: Aspartate 1-decarboxylase (126 aa).

The Schiff-base intermediate with substrate; via pyruvic acid role is filled by Ser-25. Residue Ser-25 is modified to Pyruvic acid (Ser). Position 57 (Thr-57) interacts with substrate. The active-site Proton donor is Tyr-58. 73–75 (GAA) provides a ligand contact to substrate.

This sequence belongs to the PanD family. As to quaternary structure, heterooctamer of four alpha and four beta subunits. Pyruvate is required as a cofactor. In terms of processing, is synthesized initially as an inactive proenzyme, which is activated by self-cleavage at a specific serine bond to produce a beta-subunit with a hydroxyl group at its C-terminus and an alpha-subunit with a pyruvoyl group at its N-terminus.

It is found in the cytoplasm. It catalyses the reaction L-aspartate + H(+) = beta-alanine + CO2. It functions in the pathway cofactor biosynthesis; (R)-pantothenate biosynthesis; beta-alanine from L-aspartate: step 1/1. Its function is as follows. Catalyzes the pyruvoyl-dependent decarboxylation of aspartate to produce beta-alanine. The protein is Aspartate 1-decarboxylase of Saccharophagus degradans (strain 2-40 / ATCC 43961 / DSM 17024).